The chain runs to 575 residues: Cyclic nucleotide-gated channel alpha-4 (575 aa).

Over Met-1–Leu-38 the chain is Cytoplasmic. A helical membrane pass occupies residues Asn-39–Asp-60. The Extracellular portion of the chain corresponds to Leu-61–Phe-70. The chain crosses the membrane as a helical span at residues Val-71–Gly-91. At Phe-92–Leu-116 the chain is on the cytoplasmic side. A helical membrane pass occupies residues Leu-117–His-135. The Extracellular segment spans residues Ile-136–Arg-140. Residues Leu-141–Thr-159 traverse the membrane as a helical segment. Residues Arg-160–Ala-166 are Cytoplasmic-facing. The tract at residues Pro-164–Met-272 is ion conduction pathway. The chain crosses the membrane as a helical span at residues Phe-167–Leu-190. The Extracellular segment spans residues Ser-191 to Arg-213. The next 2 membrane-spanning stretches (helical) occupy residues Leu-214–Val-248 and Gly-249–Asn-273. Positions Thr-231–Asp-234 are selectivity filter. Residues Thr-274–Gln-350 are C-linker. At Thr-274 to Glu-575 the chain is on the cytoplasmic side. The IQ-type signature appears at Leu-292 to Arg-302. A nucleoside 3',5'-cyclic phosphate is bound at residue Ile-348–Ile-471. The cyclic nucleotide-binding domain stretch occupies residues Ala-354–Lys-474. 3',5'-cyclic GMP-binding residues include Gly-414, Ser-417, Arg-430, and Thr-431. 3',5'-cyclic AMP is bound by residues Arg-430 and Thr-431. Residues Thr-493–Glu-547 adopt a coiled-coil conformation. Residues Arg-537–Glu-575 are disordered. Positions Asp-544–Pro-554 are enriched in acidic residues.

Belongs to the cyclic nucleotide-gated cation channel (TC 1.A.1.5) family. CNGA4 subfamily. The olfactory cyclic nucleotide-gated channel is an heterotetramer composed of CNGA2, CNGA4 and CNGB1b subunits with 2:1:1 stoichiometry. May form homomeric channels gated by nitric oxide. N-glycosylated. As to expression, olfactory neurons. Expressed in olfactory sensory cilia (at protein level).

It is found in the cell projection. Its subcellular location is the cilium membrane. It carries out the reaction Ca(2+)(in) = Ca(2+)(out). The enzyme catalyses Na(+)(in) = Na(+)(out). The catalysed reaction is K(+)(in) = K(+)(out). It catalyses the reaction NH4(+)(in) = NH4(+)(out). It carries out the reaction Rb(+)(in) = Rb(+)(out). The enzyme catalyses Li(+)(in) = Li(+)(out). The catalysed reaction is Cs(+)(in) = Cs(+)(out). Its activity is regulated as follows. Ca(2+)-calmodulin exerts its inhibitory effect in cAMP sensitivity by binding to IQ-like motif of CNGA4 and preferably binds to the channel in the closed state. Inhibition by PIP3 of the CNG channel probably occurs via CGNA2 binding. Ca(2+) currents are inhibited by pimozide, an L-type Ca(2+) channel blocker. In terms of biological role, pore-forming subunit of the olfactory cyclic nucleotide-gated channel. Operates in the cilia of olfactory sensory neurons where chemical stimulation of the odorant is converted to an electrical signal. Mediates odorant-induced cAMP-dependent Ca(2+) influx triggering neuron depolarization. The rise of intracellular Ca(2+) levels potentiates the olfactory response by activating Ca(2+)-dependent Cl(-) channels, but it also serves as a negative feedback signal to desensitize the channel for rapid adaptation to odorants. Conducts cAMP- and cGMP-gated ion currents, with permeability for monovalent and divalent cations. May conduct nitric oxide-gated Ca(2+) currents relevant to neurons of vomeronasal organ, a system involved in the perception of pheromones. This chain is Cyclic nucleotide-gated channel alpha-4, found in Rattus norvegicus (Rat).